The chain runs to 301 residues: Cytosolic sulfotransferase 2 (301 aa).

A 3'-phosphoadenylyl sulfate-binding site is contributed by 53 to 58 (KAGTTW). His-115 functions as the Proton acceptor in the catalytic mechanism. Residues Arg-137, Ser-145, Tyr-201, 235 to 240 (VQFDVM), and 263 to 265 (RKG) contribute to the 3'-phosphoadenylyl sulfate site.

It belongs to the sulfotransferase 1 family. Expressed in liver.

It is found in the cytoplasm. Inhibited by Co(2+), Zn(2+), Cd(2+) and Pb(2+) ions. Inactivated by Hg(2+) and Cu(2+) ions. Functionally, sulfotransferase that utilizes 3'-phospho-5'-adenylyl sulfate (PAPS) as sulfonate donor to catalyze the sulfate conjugation of a variety of xenobiotic and endogenous compounds, including 2-naphthol, hydroxychlorobiphenyls, T3 (triiodo-L-thyronine), T4 (thyroxine), estrone and DOPA. In Danio rerio (Zebrafish), this protein is Cytosolic sulfotransferase 2.